Reading from the N-terminus, the 532-residue chain is uncharacterized protein (532 aa).

The next 5 helical transmembrane spans lie at 11-31, 51-71, 126-146, 147-167, and 231-253; these read YLSH…ALII, IEPF…KIFF, LIDI…YTLW, ILYN…IIVF, and YVES…VLLI. In terms of domain architecture, ABC transporter spans 315-531; sequence ICINKLVYEY…MIIPMNNGII (217 aa). 349–356 provides a ligand contact to ATP; that stretch reads GKSGSGKS.

Its subcellular location is the membrane. This is an uncharacterized protein from Acanthamoeba polyphaga mimivirus (APMV).